The following is an 83-amino-acid chain: Late seed maturation protein P8B6 (83 aa).

2 stretches are compositionally biased toward basic and acidic residues: residues 1 to 18 (MASQ…KKGE) and 37 to 51 (AEGR…KEQL). The tract at residues 1 to 83 (MASQQEKKQL…DAEDEPSTRT (83 aa)) is disordered. Over residues 73 to 83 (EDAEDEPSTRT) the composition is skewed to acidic residues.

The protein belongs to the small hydrophilic plant seed protein family.

It is found in the cytoplasm. Its function is as follows. This protein may play a role in equipping the seed for survival, maintaining a minimal level of hydration in the dry organism and preventing the denaturation of cytoplasmic components, or may play a role during imbibition by controlling water uptake. The chain is Late seed maturation protein P8B6 from Raphanus sativus (Radish).